Here is a 355-residue protein sequence, read N- to C-terminus: Ribosomal RNA large subunit methyltransferase M (355 aa).

S-adenosyl-L-methionine-binding positions include Ser191, 224–227 (APGG), Asp243, Asp263, and Asp279. Catalysis depends on Lys308, which acts as the Proton acceptor.

Belongs to the class I-like SAM-binding methyltransferase superfamily. RNA methyltransferase RlmE family. RlmM subfamily. In terms of assembly, monomer.

Its subcellular location is the cytoplasm. The enzyme catalyses cytidine(2498) in 23S rRNA + S-adenosyl-L-methionine = 2'-O-methylcytidine(2498) in 23S rRNA + S-adenosyl-L-homocysteine + H(+). Its function is as follows. Catalyzes the 2'-O-methylation at nucleotide C2498 in 23S rRNA. The sequence is that of Ribosomal RNA large subunit methyltransferase M from Stenotrophomonas maltophilia (strain R551-3).